Here is a 426-residue protein sequence, read N- to C-terminus: Putative F-box protein At4g38870 (426 aa).

One can recognise an F-box domain in the interval Ser-47 to Leu-92.

The protein is Putative F-box protein At4g38870 of Arabidopsis thaliana (Mouse-ear cress).